Here is a 543-residue protein sequence, read N- to C-terminus: CTP synthase (543 aa).

Positions 1-265 (MTRYIFVTGG…DDYVVERFGL (265 aa)) are amidoligase domain. Residue Ser-13 participates in CTP binding. Residue Ser-13 participates in UTP binding. Residues 14 to 19 (SLGKGI) and Asp-71 contribute to the ATP site. Asp-71 and Glu-139 together coordinate Mg(2+). CTP-binding positions include 146 to 148 (DIE), 186 to 191 (KTKPTQ), and Lys-222. UTP-binding positions include 186 to 191 (KTKPTQ) and Lys-222. One can recognise a Glutamine amidotransferase type-1 domain in the interval 290-541 (NIAMVGKYME…VNAALEYKAK (252 aa)). Gly-351 contacts L-glutamine. Cys-378 serves as the catalytic Nucleophile; for glutamine hydrolysis. Residues 379–382 (LGMQ), Glu-402, and Arg-469 contribute to the L-glutamine site. Catalysis depends on residues His-514 and Glu-516.

This sequence belongs to the CTP synthase family. In terms of assembly, homotetramer.

The catalysed reaction is UTP + L-glutamine + ATP + H2O = CTP + L-glutamate + ADP + phosphate + 2 H(+). The enzyme catalyses L-glutamine + H2O = L-glutamate + NH4(+). It carries out the reaction UTP + NH4(+) + ATP = CTP + ADP + phosphate + 2 H(+). Its pathway is pyrimidine metabolism; CTP biosynthesis via de novo pathway; CTP from UDP: step 2/2. Its activity is regulated as follows. Allosterically activated by GTP, when glutamine is the substrate; GTP has no effect on the reaction when ammonia is the substrate. The allosteric effector GTP functions by stabilizing the protein conformation that binds the tetrahedral intermediate(s) formed during glutamine hydrolysis. Inhibited by the product CTP, via allosteric rather than competitive inhibition. Functionally, catalyzes the ATP-dependent amination of UTP to CTP with either L-glutamine or ammonia as the source of nitrogen. Regulates intracellular CTP levels through interactions with the four ribonucleotide triphosphates. The protein is CTP synthase of Stutzerimonas stutzeri (strain A1501) (Pseudomonas stutzeri).